The chain runs to 554 residues: 3-(3-hydroxy-phenyl)propionate/3-hydroxycinnamic acid hydroxylase (554 aa).

Residues Gln-17–Lys-46 and Phe-285–Asp-295 each bind FAD.

The protein belongs to the PheA/TfdB FAD monooxygenase family. Requires FAD as cofactor.

It catalyses the reaction 3-(3-hydroxyphenyl)propanoate + NADH + O2 + H(+) = 3-(2,3-dihydroxyphenyl)propanoate + NAD(+) + H2O. It carries out the reaction (2E)-3-(3-hydroxyphenyl)prop-2-enoate + NADH + O2 + H(+) = (2E)-3-(2,3-dihydroxyphenyl)prop-2-enoate + NAD(+) + H2O. It participates in aromatic compound metabolism; 3-phenylpropanoate degradation. In terms of biological role, catalyzes the insertion of one atom of molecular oxygen into position 2 of the phenyl ring of 3-(3-hydroxyphenyl)propionate (3-HPP) and hydroxycinnamic acid (3HCI). The protein is 3-(3-hydroxy-phenyl)propionate/3-hydroxycinnamic acid hydroxylase of Escherichia coli O81 (strain ED1a).